The primary structure comprises 470 residues: Ribulose bisphosphate carboxylase large chain (470 aa).

Substrate contacts are provided by Asn115 and Thr165. Catalysis depends on Lys167, which acts as the Proton acceptor. Residue Lys169 coordinates substrate. Residues Lys193, Asp195, and Glu196 each coordinate Mg(2+). Lys193 is modified (N6-carboxylysine). His286 functions as the Proton acceptor in the catalytic mechanism. 3 residues coordinate substrate: Arg287, His319, and Ser371.

Belongs to the RuBisCO large chain family. Type I subfamily. In terms of assembly, heterohexadecamer of 8 large chains and 8 small chains. It depends on Mg(2+) as a cofactor.

The protein resides in the carboxysome. The enzyme catalyses 2 (2R)-3-phosphoglycerate + 2 H(+) = D-ribulose 1,5-bisphosphate + CO2 + H2O. It catalyses the reaction D-ribulose 1,5-bisphosphate + O2 = 2-phosphoglycolate + (2R)-3-phosphoglycerate + 2 H(+). Functionally, ruBisCO catalyzes two reactions: the carboxylation of D-ribulose 1,5-bisphosphate, the primary event in carbon dioxide fixation, as well as the oxidative fragmentation of the pentose substrate in the photorespiration process. Both reactions occur simultaneously and in competition at the same active site. The chain is Ribulose bisphosphate carboxylase large chain from Prochlorococcus marinus (strain NATL1A).